Reading from the N-terminus, the 492-residue chain is Ketol-acid reductoisomerase (NADP(+)) (492 aa).

One can recognise a KARI N-terminal Rossmann domain in the interval 15 to 208 (AQLGQCRFMD…GGDRAGVLQS (194 aa)). NADP(+)-binding positions include 45–48 (CGAQ), Arg-68, Arg-76, Ser-78, and 108–110 (DKQ). His-132 is an active-site residue. Gly-158 is an NADP(+) binding site. KARI C-terminal knotted domains follow at residues 209–353 (SFIA…DEQT) and 354–486 (YFDK…MTDM). The Mg(2+) site is built by Asp-217, Glu-221, Glu-389, and Glu-393. Residue Ser-414 participates in substrate binding.

It belongs to the ketol-acid reductoisomerase family. It depends on Mg(2+) as a cofactor.

It catalyses the reaction (2R)-2,3-dihydroxy-3-methylbutanoate + NADP(+) = (2S)-2-acetolactate + NADPH + H(+). It carries out the reaction (2R,3R)-2,3-dihydroxy-3-methylpentanoate + NADP(+) = (S)-2-ethyl-2-hydroxy-3-oxobutanoate + NADPH + H(+). It participates in amino-acid biosynthesis; L-isoleucine biosynthesis; L-isoleucine from 2-oxobutanoate: step 2/4. Its pathway is amino-acid biosynthesis; L-valine biosynthesis; L-valine from pyruvate: step 2/4. Functionally, involved in the biosynthesis of branched-chain amino acids (BCAA). Catalyzes an alkyl-migration followed by a ketol-acid reduction of (S)-2-acetolactate (S2AL) to yield (R)-2,3-dihydroxy-isovalerate. In the isomerase reaction, S2AL is rearranged via a Mg-dependent methyl migration to produce 3-hydroxy-3-methyl-2-ketobutyrate (HMKB). In the reductase reaction, this 2-ketoacid undergoes a metal-dependent reduction by NADPH to yield (R)-2,3-dihydroxy-isovalerate. The polypeptide is Ketol-acid reductoisomerase (NADP(+)) (Shewanella oneidensis (strain ATCC 700550 / JCM 31522 / CIP 106686 / LMG 19005 / NCIMB 14063 / MR-1)).